Reading from the N-terminus, the 393-residue chain is Prokineticin receptor 1 (393 aa).

Residues 1-62 (METTVGALGE…TNSRTFFAAK (62 aa)) lie on the Extracellular side of the membrane. Asn11 carries an N-linked (GlcNAc...) asparagine glycan. Residues 63-83 (IVIGMALVGIMLVCGIGNFIF) form a helical membrane-spanning segment. At 84 to 98 (ITALARYKKLRNLTN) the chain is on the cytoplasmic side. The helical transmembrane segment at 99–119 (LLIANLAISDFLVAIVCCPFE) threads the bilayer. Residues 120–146 (MDYYVVRQLSWEHGHVLCASVNYLRTV) are Extracellular-facing. Cys137 and Cys217 form a disulfide bridge. Residues 147–167 (SLYVSTNALLAIAIDRYLAIV) form a helical membrane-spanning segment. The Cytoplasmic portion of the chain corresponds to 168 to 179 (HPLRPRMKCQTA). The chain crosses the membrane as a helical span at residues 180-200 (AGLIFLVWSVSILIAIPAAYF). The Extracellular segment spans residues 201 to 232 (TTETVLVIVERQEKIFCGQIWPVDQQFYYRSY). Residues 233–253 (FLLVFGLEFVGPVVAMTLCYA) traverse the membrane as a helical segment. The Cytoplasmic segment spans residues 254–282 (RVSRELWFKAVPGFQTEQIRRRLRCRRRT). Residues 283-303 (VLGLVCVLSAYVLCWAPFYGF) form a helical membrane-spanning segment. At 304–322 (TIVRDFFPSVFVKEKHYLT) the chain is on the extracellular side. Residues 323 to 343 (AFYVVECIAMSNSMINTLCFV) form a helical membrane-spanning segment. Residues 344–393 (TVRNNTSKYLKRILRLQWRASPSGSKASADLDLRTTGIPATEEVDCIRLK) are Cytoplasmic-facing.

The protein belongs to the G-protein coupled receptor 1 family. Expressed at high levels in the heart, skeletal muscle and pancreas. Expressed at lower levels in the brain, lung, liver and kidney.

It is found in the cell membrane. In terms of biological role, receptor for prokineticin 1. Exclusively coupled to the G(q) subclass of heteromeric G proteins. Activation leads to mobilization of calcium, stimulation of phosphoinositide turnover and activation of p44/p42 mitogen-activated protein kinase. May play a role during early pregnancy. This Mus musculus (Mouse) protein is Prokineticin receptor 1 (Prokr1).